The sequence spans 45 residues: Iota-conotoxin-like R11.13 (45 aa).

4 disulfide bridges follow: C5–C19, C12–C22, C18–C27, and C21–C36. D-leucine is present on L43. Residue R45 is a propeptide, removed by a carboxypeptidase.

This sequence belongs to the conotoxin I1 superfamily. In terms of tissue distribution, expressed by the venom duct.

The protein resides in the secreted. Functionally, iota-conotoxins bind to voltage-gated sodium channels (Nav) and act as agonists by shifting the voltage-dependence of activation to more hyperpolarized levels. Produces general excitatory symptoms. The protein is Iota-conotoxin-like R11.13 of Conus radiatus (Rayed cone).